A 537-amino-acid polypeptide reads, in one-letter code: GTPase LSG1-1 (537 aa).

A CP-type G domain is found at 158-362; the sequence is WRQLWRVLER…LCDCPGLVFP (205 aa). The DARXP motif motif lies at 176–180; sequence DARDP. The G4 stretch occupies residues 206-209; that stretch reads NKAD. Residue 206–209 participates in GTP binding; it reads NKAD. The segment at 234–236 is G5; that stretch reads SAK. Residues 311–318 form a G1 region; the sequence is GYPNVGKS. Residue 314–319 coordinates GTP; the sequence is NVGKSS. The interval 337–341 is G2; that stretch reads GKTKH. The segment at 355 to 358 is G3; that stretch reads DCPG. Residue G358 participates in GTP binding. The tract at residues 484 to 508 is disordered; sequence LGAETREGSQTEKKGEEAPSLGLDQ. The segment covering 487 to 500 has biased composition (basic and acidic residues); the sequence is ETREGSQTEKKGEE.

This sequence belongs to the TRAFAC class YlqF/YawG GTPase family. As to expression, ubiquitous, with the highest expression in stem and hypsophyll on day 66.

The protein localises to the cytoplasm. Functionally, GTPase that might be redundant with LSG1-2 for ribosome biogenesis. Binds to 23S rRNA. The polypeptide is GTPase LSG1-1 (Arabidopsis thaliana (Mouse-ear cress)).